A 391-amino-acid polypeptide reads, in one-letter code: Putative gustatory receptor 36a (391 aa).

Residues 1-3 (MFD) are Cytoplasmic-facing. Residues 4–24 (WVGLLLKVLYYYGQIIGLINF) traverse the membrane as a helical segment. Topologically, residues 25–38 (EIDWQRGRVVAAQR) are extracellular. A helical transmembrane segment spans residues 39 to 59 (GILFAIAINVLICMVLLLQIS). At 60–73 (KKFNLDVYFGRANQ) the chain is on the cytoplasmic side. A helical membrane pass occupies residues 74 to 94 (LHQYVIIVMVSLRMASGISAI). Topologically, residues 95–126 (LNRWRQRAQLMRLVECVLRLFLKKPHVKQMSR) are extracellular. A helical transmembrane segment spans residues 127–147 (WAILVKFSVGVVSNFLQMAIS). Over 148-165 (MESLDRLGFNEFVGMASD) the chain is Cytoplasmic. Residues 166 to 186 (FWMSAIINMAISQHYLVILFV) traverse the membrane as a helical segment. Residues 187 to 247 (RAYYHLLKTE…LQSIVTQLNQ (61 aa)) lie on the Extracellular side of the membrane. The chain crosses the membrane as a helical span at residues 248 to 268 (VFGIQGIMVYGGYYIFSVATT). The Cytoplasmic portion of the chain corresponds to 269–290 (YITYSLAINGIEELHLSVRAAA). Residues 291-311 (LVFSWFLFYYTSAILNLFVML) traverse the membrane as a helical segment. Topologically, residues 312–391 (KLFDDHKEME…FLIQYDMEYF (80 aa)) are extracellular.

It belongs to the insect chemoreceptor superfamily. Gustatory receptor (GR) family. Gr22e subfamily.

The protein localises to the cell membrane. Probable gustatory receptor which mediates acceptance or avoidance behavior, depending on its substrates. The sequence is that of Putative gustatory receptor 36a (Gr36a) from Drosophila melanogaster (Fruit fly).